The following is a 493-amino-acid chain: 3-octaprenyl-4-hydroxybenzoate carboxy-lyase (493 aa).

Asn172 contributes to the Mn(2+) binding site. Prenylated FMN-binding positions include 175–177 (IYR), 189–191 (RWL), and 194–195 (RG). Glu238 is a binding site for Mn(2+). Catalysis depends on Asp287, which acts as the Proton donor.

It belongs to the UbiD family. In terms of assembly, homohexamer. Prenylated FMN is required as a cofactor. It depends on Mn(2+) as a cofactor.

The protein resides in the cell membrane. The catalysed reaction is a 4-hydroxy-3-(all-trans-polyprenyl)benzoate + H(+) = a 2-(all-trans-polyprenyl)phenol + CO2. Its pathway is cofactor biosynthesis; ubiquinone biosynthesis. Catalyzes the decarboxylation of 3-octaprenyl-4-hydroxy benzoate to 2-octaprenylphenol, an intermediate step in ubiquinone biosynthesis. The polypeptide is 3-octaprenyl-4-hydroxybenzoate carboxy-lyase (Shewanella amazonensis (strain ATCC BAA-1098 / SB2B)).